A 734-amino-acid polypeptide reads, in one-letter code: MALRFPRFSQGLAQDPTTRRIWFGIATAHDFESHDDITEERLYQNIFASHFGQLAIIFLWTSGNLFHVAWQGNFEAWVQDPLHVRPIAHAIWDPHFGQPAVEAFSRGGALGPVNIAYSGVYQWWYTIGLRTNEDLYTGALFLLFLSAISLIAGWLHLQPKWKPSVSWFKNAESRLNHHLSGLFGVSSLAWTGHLVHVAIPGSRGEYVRWNNFLDVLPHPQGLGPLFTGQWNLYAQNPDSSSHLFGTSQGSGTAILTLLGGFHPQTQSLWLTDIAHHHLAIAFIFLVAGHMYRTNFGIGHSIKDLLEAHIPPGGRLGRGHKGLYDTINNSLHFQLGLALASLGVITSLVAQHMYSLPAYAFIAQDFTTQAALYTHHQYIAGFIMTGAFAHGAIFFIRDYNPEQNEDNVLARMLDHKEAIISHLSWASLFLGFHTLGLYVHNDVMLAFGTPEKQILIEPIFAQWIQSAHGKTSYGFDVLLSSTDGPAFNAGRSIWLPGWLSAVNENSNSLFLTIGPGDFLVHHAIALGLHTTTLILVKGALDARGSKLMPDKKDFGYSFPCDGPGRGGTCDISAWDAFYLAVFWMLNTIGWVTFYWHWNHITLWQGNVSQFNESSTYLMGWLRDYLWLNSSQLINGYNPFGMNSLSVWAWMFLFGHLVWATGFMFLISWRGYWQELIETLAWAHERTPLANLIRWRDKPVALSIVQARLVGLAHFSVGYIFTYAAFLIASTSGKFG.

A run of 8 helical transmembrane segments spans residues 46–69 (IFAS…FHVA), 135–158 (LYTG…LHLQ), 175–199 (LNHH…HVAI), 273–291 (IAHH…GHMY), 330–353 (LHFQ…QHMY), 369–395 (AALY…IFFI), 417–439 (AIIS…LYVH), and 517–535 (FLVH…LILV). Residues cysteine 559 and cysteine 568 each coordinate [4Fe-4S] cluster. 2 consecutive transmembrane segments (helical) span residues 575 to 596 (AFYL…YWHW) and 643 to 665 (LSVW…MFLI). Residues histidine 654, methionine 662, and tyrosine 670 each coordinate chlorophyll a. Tryptophan 671 is a phylloquinone binding site. Residues 707–727 (LVGLAHFSVGYIFTYAAFLIA) form a helical membrane-spanning segment.

This sequence belongs to the PsaA/PsaB family. In terms of assembly, the PsaA/B heterodimer binds the P700 chlorophyll special pair and subsequent electron acceptors. PSI consists of a core antenna complex that captures photons, and an electron transfer chain that converts photonic excitation into a charge separation. The eukaryotic PSI reaction center is composed of at least 11 subunits. The cofactor is P700 is a chlorophyll a/chlorophyll a' dimer, A0 is one or more chlorophyll a, A1 is one or both phylloquinones and FX is a shared 4Fe-4S iron-sulfur center..

The protein localises to the plastid. It is found in the chloroplast thylakoid membrane. It catalyses the reaction reduced [plastocyanin] + hnu + oxidized [2Fe-2S]-[ferredoxin] = oxidized [plastocyanin] + reduced [2Fe-2S]-[ferredoxin]. Functionally, psaA and PsaB bind P700, the primary electron donor of photosystem I (PSI), as well as the electron acceptors A0, A1 and FX. PSI is a plastocyanin-ferredoxin oxidoreductase, converting photonic excitation into a charge separation, which transfers an electron from the donor P700 chlorophyll pair to the spectroscopically characterized acceptors A0, A1, FX, FA and FB in turn. Oxidized P700 is reduced on the lumenal side of the thylakoid membrane by plastocyanin. The chain is Photosystem I P700 chlorophyll a apoprotein A2 from Citrus sinensis (Sweet orange).